Consider the following 39-residue polypeptide: Putative beta-neurotoxin (39 aa).

The tract at residues 1–39 (GGKEGYPLNSSNGCKSGRFAGTNSNENTECKGXDAENGY) is disordered. The LCN-type CS-alpha/beta domain maps to 3–39 (KEGYPLNSSNGCKSGRFAGTNSNENTECKGXDAENGY). A compositionally biased stretch (basic and acidic residues) spans 28 to 39 (TECKGXDAENGY).

Belongs to the long (4 C-C) scorpion toxin superfamily. Sodium channel inhibitor family. Beta subfamily. In terms of tissue distribution, expressed by the venom gland.

The protein localises to the secreted. Beta toxins bind voltage-independently at site-4 of sodium channels (Nav) and shift the voltage of activation toward more negative potentials thereby affecting sodium channel activation and promoting spontaneous and repetitive firing. This chain is Putative beta-neurotoxin, found in Tityus pachyurus (Colombian scorpion).